We begin with the raw amino-acid sequence, 228 residues long: Tumor necrosis factor receptor superfamily member 18 (228 aa).

Positions 1–19 (MGAWAMLYGVSMLCVLDLG) are cleaved as a signal peptide. Over 20–153 (QPSVVEEPGC…EPLPTEQYGH (134 aa)) the chain is Extracellular. TNFR-Cys repeat units lie at residues 28–61 (GCGPGKVQNGSGNNTRCCSLYAPGKEDCPKERCI), 62–101 (CVTPEYHCGDPQCKICKHYPCQPGQRVESQGDIVFGFRCV), and 102–142 (ACAM…AVCI). 5 disulfides stabilise this stretch: Cys-29/Cys-44, Cys-62/Cys-74, Cys-69/Cys-82, Cys-103/Cys-122, and Cys-116/Cys-141. N-linked (GlcNAc...) asparagine glycosylation is found at Asn-36 and Asn-40. 2 N-linked (GlcNAc...) asparagine glycosylation sites follow: Asn-121 and Asn-134. A helical membrane pass occupies residues 154–174 (LTVIFLVMAACIFFLTTVQLG). The Cytoplasmic portion of the chain corresponds to 175-228 (LHIWQLRRQHMCPRETQPFAEVQLSAEDACSFQFPEEERGEQTEEKCHLGGRWP).

As to quaternary structure, binds to TRAF1, TRAF2, and TRAF3, but not TRAF5 and TRAF6. Binds through its C-terminus to SIVA1/SIVA. Preferentially expressed in activated T lymphocytes.

Its subcellular location is the cell membrane. It is found in the secreted. In terms of biological role, receptor for TNFSF18. Seems to be involved in interactions between activated T-lymphocytes and endothelial cells and in the regulation of T-cell receptor-mediated cell death. Mediated NF-kappa-B activation via the TRAF2/NIK pathway. The sequence is that of Tumor necrosis factor receptor superfamily member 18 (Tnfrsf18) from Mus musculus (Mouse).